Consider the following 178-residue polypeptide: Cytochrome b6-f complex iron-sulfur subunit 1 (178 aa).

Residues 17-36 (LLNFLAGTTVAVTASAGAYA) form a helical membrane-spanning segment. A Rieske domain is found at 61-161 (GNPIPASQIL…VAVVDDQIFI (101 aa)). [2Fe-2S] cluster is bound by residues C107, H109, C125, and H128. Residues C112 and C127 are joined by a disulfide bond.

Belongs to the Rieske iron-sulfur protein family. In terms of assembly, the 4 large subunits of the cytochrome b6-f complex are cytochrome b6, subunit IV (17 kDa polypeptide, PetD), cytochrome f and the Rieske protein, while the 4 small subunits are PetG, PetL, PetM and PetN. The complex functions as a dimer. [2Fe-2S] cluster is required as a cofactor.

The protein resides in the cellular thylakoid membrane. The enzyme catalyses 2 oxidized [plastocyanin] + a plastoquinol + 2 H(+)(in) = 2 reduced [plastocyanin] + a plastoquinone + 4 H(+)(out). Functionally, component of the cytochrome b6-f complex, which mediates electron transfer between photosystem II (PSII) and photosystem I (PSI), cyclic electron flow around PSI, and state transitions. The sequence is that of Cytochrome b6-f complex iron-sulfur subunit 1 from Synechocystis sp. (strain ATCC 27184 / PCC 6803 / Kazusa).